Consider the following 91-residue polypeptide: Cell division topological specificity factor (91 aa).

The protein belongs to the MinE family.

Its function is as follows. Prevents the cell division inhibition by proteins MinC and MinD at internal division sites while permitting inhibition at polar sites. This ensures cell division at the proper site by restricting the formation of a division septum at the midpoint of the long axis of the cell. The sequence is that of Cell division topological specificity factor from Chloroflexus aggregans (strain MD-66 / DSM 9485).